The primary structure comprises 1177 residues: Solute carrier family 9 member C1 (1177 aa).

At M1–E17 the chain is on the extracellular side. The helical transmembrane segment at V18–E37 threads the bilayer. The Cytoplasmic segment spans residues D38–P42. The helical transmembrane segment at V43–T60 threads the bilayer. Residues S61–P76 are Extracellular-facing. The helical transmembrane segment at D77 to F93 threads the bilayer. Residues D94–L103 lie on the Cytoplasmic side of the membrane. The chain crosses the membrane as a helical span at residues F104–V129. A transport core domain region spans residues F104 to D191. The Extracellular portion of the chain corresponds to N130–K135. A helical membrane pass occupies residues P136 to L161. The Cytoplasmic segment spans residues G162–S164. A helical transmembrane segment spans residues R165–M190. Over D191–L204 the chain is Extracellular. A helical transmembrane segment spans residues A205–T236. Topologically, residues V237–D240 are cytoplasmic. The helical transmembrane segment at D241–V262 threads the bilayer. Over G263–S265 the chain is Extracellular. A helical transmembrane segment spans residues G266 to S279. Residues T280–I286 lie on the Cytoplasmic side of the membrane. Residues E287–Y319 form a helical membrane-spanning segment. Residues L320–F324 lie on the Extracellular side of the membrane. The helical transmembrane segment at V325–R354 threads the bilayer. The transport core domain stretch occupies residues V325–L426. Residues V355–S360 are Cytoplasmic-facing. Residues W361–F391 traverse the membrane as a helical segment. Topologically, residues G392 to K395 are extracellular. Residues E396–L426 form a helical membrane-spanning segment. Over G427–E612 the chain is Cytoplasmic. Positions Y598–F678 are ion transport-like. Residues F613–I633 traverse the membrane as a helical segment. Residues S634–N637 lie on the Extracellular side of the membrane. The helical transmembrane segment at V638–A664 threads the bilayer. Over A665–F671 the chain is Cytoplasmic. The chain crosses the membrane as a helical span at residues S672–D696. Residues T697–E704 are Extracellular-facing. A helical membrane pass occupies residues T705–L731. The Cytoplasmic portion of the chain corresponds to Q732–E1177.

This sequence belongs to the monovalent cation:proton antiporter 1 (CPA1) transporter (TC 2.A.36) family. In terms of assembly, interacts with soluble adenylyl cyclase (sAC). In terms of tissue distribution, sperm.

It is found in the cell projection. The protein localises to the cilium. Its subcellular location is the flagellum membrane. In terms of biological role, sperm-specific solute carrier involved in intracellular pH regulation of spermatozoa. Required for sperm motility and fertility. Involved in sperm cell hyperactivation, a step needed for sperm motility which is essential late in the preparation of sperm for fertilization. Required for the expression and bicarbonate regulation of the soluble adenylyl cyclase (sAC). In Homo sapiens (Human), this protein is Solute carrier family 9 member C1 (SLC9C1).